The chain runs to 100 residues: Small ribosomal subunit protein uS14c (100 aa).

Belongs to the universal ribosomal protein uS14 family. As to quaternary structure, part of the 30S ribosomal subunit.

Its subcellular location is the plastid. Binds 16S rRNA, required for the assembly of 30S particles. This is Small ribosomal subunit protein uS14c (rps14) from Cuscuta reflexa (Southern Asian dodder).